Consider the following 475-residue polypeptide: UDP-N-acetylmuramate--L-alanine ligase (475 aa).

Position 117–123 (117–123 (GTHGKTT)) interacts with ATP.

It belongs to the MurCDEF family.

Its subcellular location is the cytoplasm. It carries out the reaction UDP-N-acetyl-alpha-D-muramate + L-alanine + ATP = UDP-N-acetyl-alpha-D-muramoyl-L-alanine + ADP + phosphate + H(+). It participates in cell wall biogenesis; peptidoglycan biosynthesis. In terms of biological role, cell wall formation. In Chlorobaculum tepidum (strain ATCC 49652 / DSM 12025 / NBRC 103806 / TLS) (Chlorobium tepidum), this protein is UDP-N-acetylmuramate--L-alanine ligase.